Here is a 103-residue protein sequence, read N- to C-terminus: MQNQRIRIRLKAFDHRLIDQSTAEIVETAKRTGAQVRGPIPLPTRKERFTVLISPHVNKDARDQYEIRTHKRLVDIVEPTEKTVDALMRLDLAAGVDVQISLG.

Belongs to the universal ribosomal protein uS10 family. Part of the 30S ribosomal subunit.

In terms of biological role, involved in the binding of tRNA to the ribosomes. The protein is Small ribosomal subunit protein uS10 of Actinobacillus pleuropneumoniae serotype 5b (strain L20).